Here is a 413-residue protein sequence, read N- to C-terminus: Phosphopentomutase (413 aa).

D11, D306, H311, D347, H348, and H359 together coordinate Mn(2+).

The protein belongs to the phosphopentomutase family. Mn(2+) is required as a cofactor.

The protein resides in the cytoplasm. It carries out the reaction 2-deoxy-alpha-D-ribose 1-phosphate = 2-deoxy-D-ribose 5-phosphate. The catalysed reaction is alpha-D-ribose 1-phosphate = D-ribose 5-phosphate. Its pathway is carbohydrate degradation; 2-deoxy-D-ribose 1-phosphate degradation; D-glyceraldehyde 3-phosphate and acetaldehyde from 2-deoxy-alpha-D-ribose 1-phosphate: step 1/2. In terms of biological role, isomerase that catalyzes the conversion of deoxy-ribose 1-phosphate (dRib-1-P) and ribose 1-phosphate (Rib-1-P) to deoxy-ribose 5-phosphate (dRib-5-P) and ribose 5-phosphate (Rib-5-P), respectively. This Helicobacter pylori (strain ATCC 700392 / 26695) (Campylobacter pylori) protein is Phosphopentomutase.